Reading from the N-terminus, the 369-residue chain is N-succinyl-L-Arg/Lys racemase (369 aa).

Substrate is bound by residues Tyr-26, Asp-51, 161–163 (KMK), and 191–193 (DVN). Mg(2+) is bound by residues Asp-191, Glu-218, and Asp-243. Substrate-binding positions include Lys-267, 295-296 (SM), and 320-322 (ELT).

This sequence belongs to the mandelate racemase/muconate lactonizing enzyme family. The cofactor is Mg(2+).

Catalyzes efficient racemization of N-succinyl-L-Arg and N-succinyl-L-Lys, suggesting that these are physiological substrates of this enzyme. Has low activity with L-Asp-L-Lys, and even lower activity with L-Leu-L-Arg, L-Leu-L-Lys, N-succinyl-L-His and N-succinyl-L-Met (in vitro). This chain is N-succinyl-L-Arg/Lys racemase, found in Bacillus cereus (strain ATCC 14579 / DSM 31 / CCUG 7414 / JCM 2152 / NBRC 15305 / NCIMB 9373 / NCTC 2599 / NRRL B-3711).